The sequence spans 403 residues: Argininosuccinate synthase (403 aa).

ATP-binding positions include alanine 10 to serine 18 and alanine 37. L-citrulline contacts are provided by tyrosine 88 and serine 93. An ATP-binding site is contributed by glycine 118. Residues threonine 120, asparagine 124, and aspartate 125 each coordinate L-aspartate. Asparagine 124 provides a ligand contact to L-citrulline. 5 residues coordinate L-citrulline: arginine 128, serine 178, serine 187, glutamate 263, and tyrosine 275.

It belongs to the argininosuccinate synthase family. Type 1 subfamily. As to quaternary structure, homotetramer.

It is found in the cytoplasm. It carries out the reaction L-citrulline + L-aspartate + ATP = 2-(N(omega)-L-arginino)succinate + AMP + diphosphate + H(+). It participates in amino-acid biosynthesis; L-arginine biosynthesis; L-arginine from L-ornithine and carbamoyl phosphate: step 2/3. The polypeptide is Argininosuccinate synthase (Marinobacter nauticus (strain ATCC 700491 / DSM 11845 / VT8) (Marinobacter aquaeolei)).